A 161-amino-acid polypeptide reads, in one-letter code: Regulator of ribonuclease activity A (161 aa).

Belongs to the RraA family. As to quaternary structure, homotrimer. Binds to both RNA-binding sites in the C-terminal region of Rne and to RhlB.

Its subcellular location is the cytoplasm. In terms of biological role, globally modulates RNA abundance by binding to RNase E (Rne) and regulating its endonucleolytic activity. Can modulate Rne action in a substrate-dependent manner by altering the composition of the degradosome. Modulates RNA-binding and helicase activities of the degradosome. This is Regulator of ribonuclease activity A from Erwinia tasmaniensis (strain DSM 17950 / CFBP 7177 / CIP 109463 / NCPPB 4357 / Et1/99).